We begin with the raw amino-acid sequence, 491 residues long: UDP-N-acetylmuramate--L-alanine ligase (491 aa).

126-132 (GTHGKTT) contributes to the ATP binding site.

Belongs to the MurCDEF family.

The protein resides in the cytoplasm. The enzyme catalyses UDP-N-acetyl-alpha-D-muramate + L-alanine + ATP = UDP-N-acetyl-alpha-D-muramoyl-L-alanine + ADP + phosphate + H(+). It functions in the pathway cell wall biogenesis; peptidoglycan biosynthesis. Cell wall formation. In Klebsiella pneumoniae subsp. pneumoniae (strain ATCC 700721 / MGH 78578), this protein is UDP-N-acetylmuramate--L-alanine ligase.